We begin with the raw amino-acid sequence, 221 residues long: Thiopurine S-methyltransferase (221 aa).

The S-adenosyl-L-methionine site is built by tryptophan 12, leucine 47, glutamate 68, and arginine 125.

The protein belongs to the class I-like SAM-binding methyltransferase superfamily. TPMT family.

Its subcellular location is the cytoplasm. The catalysed reaction is S-adenosyl-L-methionine + a thiopurine = S-adenosyl-L-homocysteine + a thiopurine S-methylether.. This chain is Thiopurine S-methyltransferase, found in Legionella pneumophila (strain Corby).